The chain runs to 347 residues: DnaJ protein ERDJ3B (347 aa).

The first 23 residues, 1–23, serve as a signal peptide directing secretion; that stretch reads MAAPRWIGPLLLLLLHFVAAVAG. The region spanning 25-90 is the J domain; the sequence is SYYDVLQVPK…EKRKIYDRYG (66 aa).

In terms of assembly, interacts with BIP1.

It is found in the endoplasmic reticulum. In terms of biological role, may play a role in protein folding in the endoplasmic reticulum. This chain is DnaJ protein ERDJ3B, found in Oryza sativa subsp. japonica (Rice).